The chain runs to 275 residues: Bis(5'-nucleosyl)-tetraphosphatase, symmetrical (275 aa).

It belongs to the Ap4A hydrolase family.

It catalyses the reaction P(1),P(4)-bis(5'-adenosyl) tetraphosphate + H2O = 2 ADP + 2 H(+). Hydrolyzes diadenosine 5',5'''-P1,P4-tetraphosphate to yield ADP. The sequence is that of Bis(5'-nucleosyl)-tetraphosphatase, symmetrical from Hamiltonella defensa subsp. Acyrthosiphon pisum (strain 5AT).